A 1006-amino-acid chain; its full sequence is Cytosolic carboxypeptidase 3 (1006 aa).

The 273-residue stretch at 304–576 (YPYTYSNLQE…HFCDSLLDYC (273 aa)) folds into the Peptidase M14 domain. Residues H368, E371, and H464 each contribute to the Zn(2+) site. E540 serves as the catalytic Proton donor/acceptor. The interval 790–810 (ESHHQLKSKAKRCSSFQSKRT) is disordered.

Belongs to the peptidase M14 family. It depends on Zn(2+) as a cofactor. As to expression, widely expressed. Expressed abundantly in tissues with m otile cilia such as testis, lung and trachea. Abundantly expressed in pituitary and kidney, moderately expressed in brain, eye, fat, pancreas, stomach, and adrenal.

It is found in the cytoplasm. The protein resides in the cytosol. It catalyses the reaction (L-glutamyl)(n+1)-gamma-L-glutamyl-L-glutamyl-[protein] + H2O = (L-glutamyl)(n)-gamma-L-glutamyl-L-glutamyl-[protein] + L-glutamate. Its function is as follows. Metallocarboxypeptidase that mediates deglutamylation of tubulin and non-tubulin target proteins. Catalyzes the removal of polyglutamate side chains present on the gamma-carboxyl group of glutamate residues within the C-terminal tail of tubulin protein. Specifically cleaves tubulin long-side-chains, while it is not able to remove the branching point glutamate. Also catalyzes the removal of polyglutamate residues from the carboxy-terminus of non-tubulin proteins such as MYLK. May catalyze the hydrolysis of aspartate from the carboxy-terminus of target proteins. Does not show detyrosinase or deglycylase activities from the carboxy-terminus of target proteins. The sequence is that of Cytosolic carboxypeptidase 3 from Mus musculus (Mouse).